The sequence spans 1181 residues: Poly [ADP-ribose] polymerase tankyrase (1181 aa).

ANK repeat units lie at residues 56-85 (RKST…SIQA), 89-118 (GGLH…SPNT), 122-151 (WNYT…NHTI), 209-238 (RRST…DVHA), 242-271 (GGLV…NVNA), 275-304 (WAFT…DPTL), 362-394 (TGDT…LLNE), 398-427 (AFLT…KVNA), 431-458 (LGQT…DTNI), 483-513 (DSET…SVNC), 519-548 (RHST…EVYA), 552-581 (GGLV…NVNV), 585-614 (WKFT…DPMK), 638-668 (RGPS…NCRD), 672-701 (RNST…DVNA), 705-734 (GGLI…VVNA), 738-767 (WGFT…DAYM), and 771-799 (EGQT…LSQQ). Disordered stretches follow at residues 807–834 (SLTS…SAIL) and 864–886 (RISP…DLLP). Positions 889 to 952 (DTITNVSGFL…LKGIAQLRST (64 aa)) constitute an SAM domain. The PARP catalytic domain maps to 969–1174 (LPDDKEFVAV…YQIVKPDDSS (206 aa)). Zn(2+) is bound by residues C1091, H1094, C1099, and C1102.

Belongs to the ARTD/PARP family. In terms of assembly, interacts (via ANK repeats) with PI31.

It carries out the reaction NAD(+) + (ADP-D-ribosyl)n-acceptor = nicotinamide + (ADP-D-ribosyl)n+1-acceptor + H(+).. The catalysed reaction is L-aspartyl-[protein] + NAD(+) = 4-O-(ADP-D-ribosyl)-L-aspartyl-[protein] + nicotinamide. The enzyme catalyses L-glutamyl-[protein] + NAD(+) = 5-O-(ADP-D-ribosyl)-L-glutamyl-[protein] + nicotinamide. Stimulates proteasome activity, probably by ADP-ribosylation of PI31. Modulates 26S proteasome assembly. In Drosophila melanogaster (Fruit fly), this protein is Poly [ADP-ribose] polymerase tankyrase.